The chain runs to 555 residues: 1,3-beta-glucanosyltransferase GAS2 (555 aa).

A signal peptide spans 1-24 (MNKKQNFYAAIIVAIFLCLQLSHG). Cys89 and Cys118 are oxidised to a cystine. (1,3-beta-D-glucosyl)n contacts are provided by residues Tyr107, 134 to 142 (SEPDISINR), Asn175, Glu176, Asp217, and Arg222. Residue Glu176 is the Proton donor of the active site. Cystine bridges form between Cys231–Cys367, Cys247–Cys278, Cys390–Cys442, Cys392–Cys489, Cys399–Cys466, and Cys419–Cys424. Glu275 acts as the Nucleophile in catalysis. Residue Tyr307 coordinates (1,3-beta-D-glucosyl)n. N-linked (GlcNAc...) asparagine glycosylation is present at Asn498. Asp531 is lipidated: GPI-anchor amidated aspartate. Positions 532-555 (GTIAFKTSGFVILLISMIAAGILL) are cleaved as a propeptide — removed in mature form.

It belongs to the glycosyl hydrolase 72 family. Post-translationally, N-glycosylated.

The protein localises to the cell membrane. Splits internally a 1,3-beta-glucan molecule and transfers the newly generated reducing end (the donor) to the non-reducing end of another 1,3-beta-glucan molecule (the acceptor) forming a 1,3-beta linkage, resulting in the elongation of 1,3-beta-glucan chains in the cell wall. Involved in spore wall assembly. This is 1,3-beta-glucanosyltransferase GAS2 (GAS2) from Saccharomyces cerevisiae (strain ATCC 204508 / S288c) (Baker's yeast).